Reading from the N-terminus, the 237-residue chain is Thiamine-phosphate synthase (237 aa).

Residues 41 to 45 (QLRDK) and N73 contribute to the 4-amino-2-methyl-5-(diphosphooxymethyl)pyrimidine site. Positions 74 and 93 each coordinate Mg(2+). Residue S112 coordinates 4-amino-2-methyl-5-(diphosphooxymethyl)pyrimidine. 143–145 (TPT) serves as a coordination point for 2-[(2R,5Z)-2-carboxy-4-methylthiazol-5(2H)-ylidene]ethyl phosphate. K146 is a 4-amino-2-methyl-5-(diphosphooxymethyl)pyrimidine binding site. Residue G192 coordinates 2-[(2R,5Z)-2-carboxy-4-methylthiazol-5(2H)-ylidene]ethyl phosphate.

Belongs to the thiamine-phosphate synthase family. Mg(2+) is required as a cofactor.

It carries out the reaction 2-[(2R,5Z)-2-carboxy-4-methylthiazol-5(2H)-ylidene]ethyl phosphate + 4-amino-2-methyl-5-(diphosphooxymethyl)pyrimidine + 2 H(+) = thiamine phosphate + CO2 + diphosphate. The catalysed reaction is 2-(2-carboxy-4-methylthiazol-5-yl)ethyl phosphate + 4-amino-2-methyl-5-(diphosphooxymethyl)pyrimidine + 2 H(+) = thiamine phosphate + CO2 + diphosphate. It catalyses the reaction 4-methyl-5-(2-phosphooxyethyl)-thiazole + 4-amino-2-methyl-5-(diphosphooxymethyl)pyrimidine + H(+) = thiamine phosphate + diphosphate. The protein operates within cofactor biosynthesis; thiamine diphosphate biosynthesis; thiamine phosphate from 4-amino-2-methyl-5-diphosphomethylpyrimidine and 4-methyl-5-(2-phosphoethyl)-thiazole: step 1/1. Its function is as follows. Condenses 4-methyl-5-(beta-hydroxyethyl)thiazole monophosphate (THZ-P) and 2-methyl-4-amino-5-hydroxymethyl pyrimidine pyrophosphate (HMP-PP) to form thiamine monophosphate (TMP). This Arthrobacter sp. (strain FB24) protein is Thiamine-phosphate synthase.